The chain runs to 512 residues: Bifunctional NAD(P)H-hydrate repair enzyme Nnr (512 aa).

The NAD(P)H-hydrate epimerase stretch occupies residues Met1–Gln220. A YjeF N-terminal domain is found at Val11 to Leu218. The NADPHX 1; for epimerase activity stretch occupies residues Asn58–Asp62. Residues Asn59 and Asp127 each contribute to the K(+) site. The tract at residues Gly131–Glu137 is NADPHX 1; for epimerase activity. Residue Asp161 participates in (6S)-NADPHX binding. A K(+)-binding site is contributed by Thr164. In terms of domain architecture, YjeF C-terminal spans Gly228 to Leu509. The segment at Gly228–Val512 is ADP-dependent (S)-NAD(P)H-hydrate dehydratase. Gly335 lines the (6S)-NADPHX pocket. The NADPHX 2; for dehydratase activity stretch occupies residues His385–Cys391. Residues Lys421–Ser425 and His440–Gly449 contribute to the ADP site. Asp450 contacts (6S)-NADPHX.

This sequence in the N-terminal section; belongs to the NnrE/AIBP family. The protein in the C-terminal section; belongs to the NnrD/CARKD family. Requires K(+) as cofactor.

The catalysed reaction is (6S)-NADHX + ADP = AMP + phosphate + NADH + H(+). It catalyses the reaction (6S)-NADPHX + ADP = AMP + phosphate + NADPH + H(+). It carries out the reaction (6R)-NADHX = (6S)-NADHX. The enzyme catalyses (6R)-NADPHX = (6S)-NADPHX. Functionally, bifunctional enzyme that catalyzes the epimerization of the S- and R-forms of NAD(P)HX and the dehydration of the S-form of NAD(P)HX at the expense of ADP, which is converted to AMP. This allows the repair of both epimers of NAD(P)HX, a damaged form of NAD(P)H that is a result of enzymatic or heat-dependent hydration. This chain is Bifunctional NAD(P)H-hydrate repair enzyme Nnr (nnr), found in Thermanaerovibrio acidaminovorans (strain ATCC 49978 / DSM 6589 / Su883) (Selenomonas acidaminovorans).